Here is a 598-residue protein sequence, read N- to C-terminus: Aspartate--tRNA(Asp/Asn) ligase (598 aa).

An L-aspartate-binding site is contributed by glutamate 170. Residues 194–197 (QLFK) form an aspartate region. Arginine 216 provides a ligand contact to L-aspartate. ATP is bound by residues 216–218 (RDE) and glutamine 225. Histidine 448 contributes to the L-aspartate binding site. Glutamate 482 contributes to the ATP binding site. Residue arginine 489 coordinates L-aspartate. 534–537 (GWDR) serves as a coordination point for ATP. The disordered stretch occupies residues 558-598 (GGGVDPLTDAPAPITPQQRKESGIDAKPREDKPKEDAKSKA). The segment covering 575–598 (QRKESGIDAKPREDKPKEDAKSKA) has biased composition (basic and acidic residues).

This sequence belongs to the class-II aminoacyl-tRNA synthetase family. Type 1 subfamily. As to quaternary structure, homodimer.

The protein resides in the cytoplasm. It carries out the reaction tRNA(Asx) + L-aspartate + ATP = L-aspartyl-tRNA(Asx) + AMP + diphosphate. Its function is as follows. Aspartyl-tRNA synthetase with relaxed tRNA specificity since it is able to aspartylate not only its cognate tRNA(Asp) but also tRNA(Asn). Reaction proceeds in two steps: L-aspartate is first activated by ATP to form Asp-AMP and then transferred to the acceptor end of tRNA(Asp/Asn). The chain is Aspartate--tRNA(Asp/Asn) ligase from Mycolicibacterium smegmatis (strain ATCC 700084 / mc(2)155) (Mycobacterium smegmatis).